Here is a 411-residue protein sequence, read N- to C-terminus: Lissencephaly-1 homolog (411 aa).

Residues 7-39 (QREELNKAIADYLASNGFMEALESFKKETDMPG) enclose the LisH domain. A coiled-coil region spans residues 54 to 80 (TSVIRLQKKVMDLEGRLAEAEKEYISG). Over residues 77–89 (YISGTPSREKRSP) the composition is skewed to basic and acidic residues. Residues 77–96 (YISGTPSREKRSPTEWIPRP) form a disordered region. WD repeat units follow at residues 104-145 (GHRA…RTIK), 146-187 (GHTD…RTMH), 188-227 (GHDH…CVRT), 230-269 (GHRD…CKLE), 272-334 (EHDH…ALFT), 337-376 (GHDN…CCKT), and 379-411 (AHSH…WECR).

This sequence belongs to the WD repeat LIS1/nudF family.

It localises to the cytoplasm. It is found in the cytoskeleton. The protein localises to the microtubule organizing center. The protein resides in the centrosome. Its function is as follows. Positively regulates the activity of the minus-end directed microtubule motor protein dynein. May enhance dynein-mediated microtubule sliding by targeting dynein to the microtubule plus end. Required for several dynein- and microtubule-dependent processes. This is Lissencephaly-1 homolog from Ixodes scapularis (Black-legged tick).